We begin with the raw amino-acid sequence, 374 residues long: Putative glutamate--cysteine ligase 2 (374 aa).

Belongs to the glutamate--cysteine ligase type 2 family. YbdK subfamily.

It catalyses the reaction L-cysteine + L-glutamate + ATP = gamma-L-glutamyl-L-cysteine + ADP + phosphate + H(+). In terms of biological role, ATP-dependent carboxylate-amine ligase which exhibits weak glutamate--cysteine ligase activity. This Verminephrobacter eiseniae (strain EF01-2) protein is Putative glutamate--cysteine ligase 2.